A 300-amino-acid polypeptide reads, in one-letter code: Small ribosomal subunit protein uS4m (300 aa).

One can recognise an S4 RNA-binding domain in the interval 146–209; it reads KRVDMVLLRS…MKRKLLKRLK (64 aa).

This sequence belongs to the universal ribosomal protein uS4 family.

It is found in the mitochondrion. This chain is Small ribosomal subunit protein uS4m (mrps4), found in Dictyostelium discoideum (Social amoeba).